The chain runs to 743 residues: FHF complex subunit HOOK-interacting protein 2B (743 aa).

The segment at 186–219 (CGEPTALPKDTTSHGDKDCSHDGAPARPQLDGES) is disordered. Residues 196 to 206 (TTSHGDKDCSH) are compositionally biased toward basic and acidic residues.

Belongs to the FHIP family. As to expression, expressed in liver.

Functionally, able to activate MAPK/ERK and TGFB signaling pathways. May regulate the activity of genes involved in intestinal barrier function and immunoprotective inflammation. May play a role in cell proliferation. The sequence is that of FHF complex subunit HOOK-interacting protein 2B from Homo sapiens (Human).